The primary structure comprises 98 residues: Co-chaperonin GroES (98 aa).

It belongs to the GroES chaperonin family. As to quaternary structure, heptamer of 7 subunits arranged in a ring. Interacts with the chaperonin GroEL.

The protein resides in the cytoplasm. Its function is as follows. Together with the chaperonin GroEL, plays an essential role in assisting protein folding. The GroEL-GroES system forms a nano-cage that allows encapsulation of the non-native substrate proteins and provides a physical environment optimized to promote and accelerate protein folding. GroES binds to the apical surface of the GroEL ring, thereby capping the opening of the GroEL channel. The sequence is that of Co-chaperonin GroES from Allorhizobium ampelinum (strain ATCC BAA-846 / DSM 112012 / S4) (Agrobacterium vitis (strain S4)).